The following is a 164-amino-acid chain: Protein SprT (164 aa).

The region spanning 14–156 is the SprT-like domain; that stretch reads QQAETFFKRP…LCRRCREILV (143 aa). His69 contributes to the Zn(2+) binding site. The active site involves Glu70. His73 lines the Zn(2+) pocket.

It belongs to the SprT family. The cofactor is Zn(2+).

It is found in the cytoplasm. In Pseudomonas entomophila (strain L48), this protein is Protein SprT.